The primary structure comprises 444 residues: Ribosomal protein uS12 methylthiotransferase RimO (444 aa).

The MTTase N-terminal domain maps to 2–118 (PSIGLLSLGC…IVEVVNHALE (117 aa)). Positions 11, 47, 81, 156, 160, and 163 each coordinate [4Fe-4S] cluster. One can recognise a Radical SAM core domain in the interval 142–372 (STPSYTAYVK…MKLQREISLS (231 aa)). The TRAM domain occupies 375 to 444 (QKRIGQEIEV…EYDLMGELAQ (70 aa)).

This sequence belongs to the methylthiotransferase family. RimO subfamily. [4Fe-4S] cluster serves as cofactor.

It is found in the cytoplasm. The enzyme catalyses L-aspartate(89)-[ribosomal protein uS12]-hydrogen + (sulfur carrier)-SH + AH2 + 2 S-adenosyl-L-methionine = 3-methylsulfanyl-L-aspartate(89)-[ribosomal protein uS12]-hydrogen + (sulfur carrier)-H + 5'-deoxyadenosine + L-methionine + A + S-adenosyl-L-homocysteine + 2 H(+). In terms of biological role, catalyzes the methylthiolation of an aspartic acid residue of ribosomal protein uS12. This Desulforamulus reducens (strain ATCC BAA-1160 / DSM 100696 / MI-1) (Desulfotomaculum reducens) protein is Ribosomal protein uS12 methylthiotransferase RimO.